A 110-amino-acid polypeptide reads, in one-letter code: Nucleoid-associated protein YpAngola_A2890 (110 aa).

Residues 90-110 (KEKMASVSNGMQLPPGFKMPF) form a disordered region.

The protein belongs to the YbaB/EbfC family. Homodimer.

The protein localises to the cytoplasm. It localises to the nucleoid. In terms of biological role, binds to DNA and alters its conformation. May be involved in regulation of gene expression, nucleoid organization and DNA protection. This chain is Nucleoid-associated protein YpAngola_A2890, found in Yersinia pestis bv. Antiqua (strain Angola).